The primary structure comprises 209 residues: FK506-binding protein 2B (209 aa).

A signal peptide spans 1 to 19 (MRFSLLALLGTIVATSVSA). The region spanning 47 to 136 (GDELSMHYTG…VFEVELLEIK (90 aa)) is the PPIase FKBP-type domain. The helical transmembrane segment at 157–177 (FTSPSFLVSTGIIVALFLIVF) threads the bilayer. Positions 178–207 (KMAKKQDIAEANEKAAAATAEASTEKKEEK) form a coiled coil. The interval 190–209 (EKAAAATAEASTEKKEEKKE) is disordered. A compositionally biased stretch (basic and acidic residues) spans 200 to 209 (STEKKEEKKE).

It belongs to the FKBP-type PPIase family. FKBP2 subfamily.

Its subcellular location is the membrane. The enzyme catalyses [protein]-peptidylproline (omega=180) = [protein]-peptidylproline (omega=0). Its activity is regulated as follows. Inhibited by both FK506 and rapamycin. PPIases accelerate the folding of proteins. It catalyzes the cis-trans isomerization of proline imidic peptide bonds in oligopeptides. The chain is FK506-binding protein 2B (FKBP3) from Rhizopus delemar (strain RA 99-880 / ATCC MYA-4621 / FGSC 9543 / NRRL 43880) (Mucormycosis agent).